A 202-amino-acid polypeptide reads, in one-letter code: NAD(P)H-quinone oxidoreductase chain 6 (202 aa).

Transmembrane regions (helical) follow at residues 9-29 (VVSF…VVLA), 32-52 (IVYS…MYLL), 61-81 (AQVL…IMLV), 98-118 (VLTA…VLAT), and 144-164 (FLLP…GAII).

The protein belongs to the complex I subunit 6 family.

It is found in the membrane. The enzyme catalyses a plastoquinone + NADH + (n+1) H(+)(in) = a plastoquinol + NAD(+) + n H(+)(out). The catalysed reaction is a plastoquinone + NADPH + (n+1) H(+)(in) = a plastoquinol + NADP(+) + n H(+)(out). NDH-1 shuttles electrons from NAD(P)H, via FMN and iron-sulfur (Fe-S) centers, to quinones in the respiratory chain. The immediate electron acceptor for the enzyme in this species is believed to be plastoquinone. Couples the redox reaction to proton translocation (for every two electrons transferred, four hydrogen ions are translocated across the cytoplasmic membrane), and thus conserves the redox energy in a proton gradient. The polypeptide is NAD(P)H-quinone oxidoreductase chain 6 (ndhG) (Nostoc sp. (strain PCC 7120 / SAG 25.82 / UTEX 2576)).